The following is a 657-amino-acid chain: 9-cis-epoxycarotenoid dioxygenase NCED9, chloroplastic (657 aa).

The Fe cation site is built by H357, H406, H471, and H642.

The protein belongs to the carotenoid oxygenase family. The cofactor is Fe(2+). In terms of tissue distribution, expressed in developing siliques, embryo and endosperm.

The protein localises to the plastid. It localises to the chloroplast stroma. The enzyme catalyses a 9-cis-epoxycarotenoid + O2 = a 12'-apo-carotenal + 2-cis,4-trans-xanthoxin. It catalyses the reaction 9-cis-violaxanthin + O2 = (3S,5R,6S)-5,6-epoxy-3-hydroxy-5,6-dihydro-12'-apo-beta-caroten-12'-al + 2-cis,4-trans-xanthoxin. It carries out the reaction 9'-cis-neoxanthin + O2 = (3S,5R,6R)-3,5-dihydroxy-6,7-didehydro-5,6-dihydro-12'-apo-beta-caroten-12'-al + 2-cis,4-trans-xanthoxin. Functionally, has a 11,12(11',12') 9-cis epoxycarotenoid cleavage activity. Catalyzes the first step of abscisic-acid biosynthesis from carotenoids. Contributes probably to abscisic acid synthesis for the induction of seed dormancy. The protein is 9-cis-epoxycarotenoid dioxygenase NCED9, chloroplastic (NCED9) of Arabidopsis thaliana (Mouse-ear cress).